We begin with the raw amino-acid sequence, 243 residues long: Small ribosomal subunit protein uS5 (243 aa).

Basic and acidic residues predominate over residues 1–10 (MSDNETKETQ). The segment at 1 to 50 (MSDNETKETQVAEETQNTVATESNNEDRKGRRGQRGEGRRGERRNRREEN) is disordered. Positions 12–23 (AEETQNTVATES) are enriched in polar residues. Over residues 25–50 (NEDRKGRRGQRGEGRRGERRNRREEN) the composition is skewed to basic and acidic residues. In terms of domain architecture, S5 DRBM spans 55-118 (LLDRVVTINR…LDAKKHMFSV (64 aa)).

This sequence belongs to the universal ribosomal protein uS5 family. As to quaternary structure, part of the 30S ribosomal subunit. Contacts proteins S4 and S8.

In terms of biological role, with S4 and S12 plays an important role in translational accuracy. Its function is as follows. Located at the back of the 30S subunit body where it stabilizes the conformation of the head with respect to the body. The sequence is that of Small ribosomal subunit protein uS5 from Bifidobacterium longum (strain DJO10A).